Consider the following 740-residue polypeptide: Platelet endothelial cell adhesion molecule (740 aa).

An N-terminal signal peptide occupies residues 1–27 (MRLRWTQGGNMWLGVLLTLQLCSSLEG). Topologically, residues 28–602 (QENSFTINSI…VRVYLAPWKK (575 aa)) are extracellular. 3 Ig-like C2-type domains span residues 35 to 126 (NSIH…YKVV), 145 to 223 (GGVV…DSVR), and 236 to 315 (PKFH…SKVS). N-linked (GlcNAc...) asparagine glycans are attached at residues Asn-52 and Asn-84. Cystine bridges form between Cys-57/Cys-109, Cys-152/Cys-206, and Cys-256/Cys-304. N-linked (GlcNAc...) asparagine glycans are attached at residues Asn-284, Asn-301, Asn-320, Asn-357, Asn-372, Asn-436, Asn-456, and Asn-552. Ig-like C2-type domains follow at residues 328-404 (PKLK…VQIA), 425-494 (GQTI…KVLR), and 500-592 (PVEE…NILA). Cystine bridges form between Cys-347/Cys-387, Cys-432/Cys-477, and Cys-524/Cys-573. The helical transmembrane segment at 603 to 621 (GLIAVVVIAVIIAVLLLGA) threads the bilayer. At 622-740 (RFYFLKKSKA…SRTEGSLDGT (119 aa)) the chain is on the cytoplasmic side. Short sequence motifs (ITIM motif) lie at residues 690-695 (VEYTEV) and 713-718 (TVYSEI). Residues Tyr-692 and Tyr-715 each carry the phosphotyrosine; by FER modification. The disordered stretch occupies residues 697-740 (VTSPEPHRGLGTKGTETVYSEIRKADPDLVENRYSRTEGSLDGT). Residues 711 to 731 (TETVYSEIRKADPDLVENRYS) form a membrane-bound segment which detaches upon phosphorylation region. Over residues 717 to 732 (EIRKADPDLVENRYSR) the composition is skewed to basic and acidic residues. The tract at residues 723–740 (PDLVENRYSRTEGSLDGT) is may play a role in cytoprotective signaling. Residues Ser-731 and Ser-736 each carry the phosphoserine modification.

As to quaternary structure, trans-homodimer (via Ig-like C2-type 1 and Ig-like C2-type 2 domains); trans-homodimerization is required for cell-cell interaction. Forms a complex with BDKRB2 and GNAQ. Interacts with BDKRB2 and GNAQ. Interacts with PTPN11; Tyr-715 is critical for PTPN11 recruitment. Interacts with FER. Interacts with CD177; the interaction is Ca(2+)-dependent; the interaction is direct. Phosphorylated on Ser and Tyr residues by src kinases after cellular activation. Upon activation, phosphorylated on Ser-731 which probably initiates the dissociation of the membrane-interaction segment (residues 711-731) from the cell membrane allowing the sequential phosphorylation of Tyr-715 and Tyr-692. Constitutively phosphorylated on Ser-736 in resting platelets. Phosphorylated on tyrosine residues by FER and FES in response to FCER1 activation. In endothelial cells Fyn mediates mechanical-force (stretch or pull) induced tyrosine phosphorylation. In terms of processing, palmitoylation by ZDHHC21 is necessary for cell surface expression in endothelial cells and enrichment in membrane rafts.

It is found in the cell membrane. Its subcellular location is the membrane raft. It localises to the cell junction. Cell adhesion molecule which is required for leukocyte transendothelial migration (TEM) under most inflammatory conditions. Tyr-692 plays a critical role in TEM and is required for efficient trafficking of PECAM1 to and from the lateral border recycling compartment (LBRC) and is also essential for the LBRC membrane to be targeted around migrating leukocytes. Trans-homophilic interaction may play a role in endothelial cell-cell adhesion via cell junctions. Heterophilic interaction with CD177 plays a role in transendothelial migration of neutrophils. Homophilic ligation of PECAM1 prevents macrophage-mediated phagocytosis of neighboring viable leukocytes by transmitting a detachment signal. Promotes macrophage-mediated phagocytosis of apoptotic leukocytes by tethering them to the phagocytic cells; PECAM1-mediated detachment signal appears to be disabled in apoptotic leukocytes. Modulates bradykinin receptor BDKRB2 activation. Regulates bradykinin- and hyperosmotic shock-induced ERK1/2 activation in endothelial cells. Induces susceptibility to atherosclerosis. In Sus scrofa (Pig), this protein is Platelet endothelial cell adhesion molecule (PECAM1).